Here is a 115-residue protein sequence, read N- to C-terminus: Large ribosomal subunit protein uL22 (115 aa).

It belongs to the universal ribosomal protein uL22 family. In terms of assembly, part of the 50S ribosomal subunit.

This protein binds specifically to 23S rRNA; its binding is stimulated by other ribosomal proteins, e.g. L4, L17, and L20. It is important during the early stages of 50S assembly. It makes multiple contacts with different domains of the 23S rRNA in the assembled 50S subunit and ribosome. Functionally, the globular domain of the protein is located near the polypeptide exit tunnel on the outside of the subunit, while an extended beta-hairpin is found that lines the wall of the exit tunnel in the center of the 70S ribosome. This is Large ribosomal subunit protein uL22 from Limosilactobacillus fermentum (strain NBRC 3956 / LMG 18251) (Lactobacillus fermentum).